The primary structure comprises 156 residues: Small ribosomal subunit protein uS7 (156 aa).

This sequence belongs to the universal ribosomal protein uS7 family. As to quaternary structure, part of the 30S ribosomal subunit. Contacts proteins S9 and S11.

Functionally, one of the primary rRNA binding proteins, it binds directly to 16S rRNA where it nucleates assembly of the head domain of the 30S subunit. Is located at the subunit interface close to the decoding center, probably blocks exit of the E-site tRNA. The sequence is that of Small ribosomal subunit protein uS7 from Thermoanaerobacter pseudethanolicus (strain ATCC 33223 / 39E) (Clostridium thermohydrosulfuricum).